The following is a 459-amino-acid chain: MAP kinase-interacting serine/threonine-protein kinase 2 (459 aa).

The tract at residues 28–67 is disordered; sequence LDPAQHGDSDFSPQCEARPDMPSSQPIDIPDAKKRGRKKK. The Nuclear localization signal motif lies at 60 to 66; it reads KKRGRKK. A Phosphoserine modification is found at serine 74. The Protein kinase domain maps to 84 to 368; that stretch reads QLQEDVLGEG…AAQVLQHPWV (285 aa). ATP is bound by residues 90-98 and lysine 113; that span reads LGEGAHARV. Residue 160–162 participates in staurosporine binding; that stretch reads EKM. The active-site Proton acceptor is the aspartate 205. Staurosporine is bound at residue glutamate 209. Residues threonine 244 and threonine 249 each carry the phosphothreonine modification. 3 residues coordinate Zn(2+): cysteine 299, cysteine 311, and cysteine 314. The residue at position 379 (threonine 379) is a Phosphothreonine. Residues serine 431 and serine 434 each carry the phosphoserine modification. The MAP kinase binding signature appears at 438-442; the sequence is LAQRR. Serine 446 carries the post-translational modification Phosphoserine. Phosphothreonine is present on threonine 450.

The protein belongs to the protein kinase superfamily. CAMK Ser/Thr protein kinase family. As to quaternary structure, monomer. Interacts with the C-terminal regions of EIF4G1 and EIF4G2; this interaction is promoted when MAPK pathways are repressed but repressed upon ERK proteins activation. Also binds to dephosphorylated MAPK3/ERK1 and MAPK1/ER2K. Interaction with phosphorylated MAPK3/ERK1 and MAPK1/ER2K protects it from dephosphorylation and inactivation. Interacts with ESR2 and EIF4E in the nucleus. The cofactor is Mg(2+). Zn(2+) serves as cofactor. In terms of processing, dual phosphorylation of Thr-244 and Thr-249 activates the kinase. Phosphorylation of Thr-379 activates the kinase. Phosphorylated upon arsenic trioxide As(2)O(3) treatment. Phosphorylated by MAPK1/ERK2, MAPK11 and MAPK14. Dephosphorylated by PP2A.

The protein resides in the cytoplasm. Its subcellular location is the nucleus. The protein localises to the PML body. The enzyme catalyses L-seryl-[protein] + ATP = O-phospho-L-seryl-[protein] + ADP + H(+). It catalyses the reaction L-threonyl-[protein] + ATP = O-phospho-L-threonyl-[protein] + ADP + H(+). Inhibited by CGP57380 and staurosporine. Its function is as follows. Serine/threonine-protein kinase that phosphorylates SFPQ/PSF, HNRNPA1 and EIF4E. May play a role in the response to environmental stress and cytokines. Appears to regulate translation by phosphorylating EIF4E, thus increasing the affinity of this protein for the 7-methylguanosine-containing mRNA cap. Required for mediating PP2A-inhibition-induced EIF4E phosphorylation. Triggers EIF4E shuttling from cytoplasm to nucleus. Enhances the formation of EIF4F complex in pachytene spermatocytes, thus promoting mRNA translation during spermatogenesis. Displays a high basal kinase activity. Acts as a mediator of the suppressive effects of IFNgamma on hematopoiesis. Negative regulator for signals that control generation of arsenic trioxide As(2)O(3)-dependent apoptosis and anti-leukemic responses. Involved in anti-apoptotic signaling in response to serum withdrawal. The chain is MAP kinase-interacting serine/threonine-protein kinase 2 (Mknk2) from Rattus norvegicus (Rat).